A 704-amino-acid chain; its full sequence is Elongation factor G (704 aa).

One can recognise a tr-type G domain in the interval 8 to 291; it reads DRVRNIGIMA…AVIDYLASPV (284 aa). GTP-binding positions include 17–24, 90–94, and 144–147; these read AHIDAGKT, DTPGH, and NKMD.

The protein belongs to the TRAFAC class translation factor GTPase superfamily. Classic translation factor GTPase family. EF-G/EF-2 subfamily.

The protein resides in the cytoplasm. In terms of biological role, catalyzes the GTP-dependent ribosomal translocation step during translation elongation. During this step, the ribosome changes from the pre-translocational (PRE) to the post-translocational (POST) state as the newly formed A-site-bound peptidyl-tRNA and P-site-bound deacylated tRNA move to the P and E sites, respectively. Catalyzes the coordinated movement of the two tRNA molecules, the mRNA and conformational changes in the ribosome. The protein is Elongation factor G of Chlorobaculum tepidum (strain ATCC 49652 / DSM 12025 / NBRC 103806 / TLS) (Chlorobium tepidum).